Here is a 174-residue protein sequence, read N- to C-terminus: CD164 sialomucin-like 2 protein (174 aa).

A signal peptide spans 1–29 (MEAPGPRALRTALCGGCCCLLLCAQLAVA). Topologically, residues 30-141 (GKGARGFGRG…AHSPGFDGAS (112 aa)) are extracellular. N-linked (GlcNAc...) asparagine glycosylation is found at N71 and N103. The chain crosses the membrane as a helical span at residues 142–162 (FIGGVVLVLSLQAVAFFVLHF). Topologically, residues 163-174 (LKAKDSTYQTLI) are cytoplasmic.

It belongs to the CD164 family.

It localises to the membrane. The polypeptide is CD164 sialomucin-like 2 protein (CD164L2) (Homo sapiens (Human)).